Consider the following 401-residue polypeptide: Nicotinate phosphoribosyltransferase (401 aa).

His221 bears the Phosphohistidine; by autocatalysis mark.

It belongs to the NAPRTase family. In terms of processing, transiently phosphorylated on a His residue during the reaction cycle. Phosphorylation strongly increases the affinity for substrates and increases the rate of nicotinate D-ribonucleotide production. Dephosphorylation regenerates the low-affinity form of the enzyme, leading to product release.

It catalyses the reaction nicotinate + 5-phospho-alpha-D-ribose 1-diphosphate + ATP + H2O = nicotinate beta-D-ribonucleotide + ADP + phosphate + diphosphate. It functions in the pathway cofactor biosynthesis; NAD(+) biosynthesis; nicotinate D-ribonucleotide from nicotinate: step 1/1. Its function is as follows. Catalyzes the synthesis of beta-nicotinate D-ribonucleotide from nicotinate and 5-phospho-D-ribose 1-phosphate at the expense of ATP. The sequence is that of Nicotinate phosphoribosyltransferase from Erwinia tasmaniensis (strain DSM 17950 / CFBP 7177 / CIP 109463 / NCPPB 4357 / Et1/99).